We begin with the raw amino-acid sequence, 236 residues long: Phospholipid hydroperoxide glutathione peroxidase, chloroplastic (236 aa).

The transit peptide at 1-64 directs the protein to the chloroplast; it reads MASMAFSTTF…SNFPIVPSKT (64 aa). Residue C111 is part of the active site.

Belongs to the glutathione peroxidase family.

The protein localises to the plastid. It localises to the chloroplast stroma. It catalyses the reaction a hydroperoxy polyunsaturated fatty acid + 2 glutathione = a hydroxy polyunsaturated fatty acid + glutathione disulfide + H2O. Functionally, protects cells and enzymes from oxidative damage, by catalyzing the reduction of hydrogen peroxide, lipid peroxides and organic hydroperoxide, by glutathione. The polypeptide is Phospholipid hydroperoxide glutathione peroxidase, chloroplastic (Pisum sativum (Garden pea)).